The sequence spans 459 residues: Argininosuccinate lyase (459 aa).

It belongs to the lyase 1 family. Argininosuccinate lyase subfamily.

It is found in the cytoplasm. The catalysed reaction is 2-(N(omega)-L-arginino)succinate = fumarate + L-arginine. The protein operates within amino-acid biosynthesis; L-arginine biosynthesis; L-arginine from L-ornithine and carbamoyl phosphate: step 3/3. This Staphylococcus aureus (strain MRSA252) protein is Argininosuccinate lyase.